The chain runs to 207 residues: 3-demethoxyubiquinol 3-hydroxylase (207 aa).

6 residues coordinate Fe cation: Glu-56, Glu-86, His-89, Glu-138, Glu-170, and His-173.

The protein belongs to the COQ7 family. The cofactor is Fe cation.

Its subcellular location is the cell membrane. The enzyme catalyses a 5-methoxy-2-methyl-3-(all-trans-polyprenyl)benzene-1,4-diol + AH2 + O2 = a 3-demethylubiquinol + A + H2O. Its pathway is cofactor biosynthesis; ubiquinone biosynthesis. Catalyzes the hydroxylation of 2-nonaprenyl-3-methyl-6-methoxy-1,4-benzoquinol during ubiquinone biosynthesis. The chain is 3-demethoxyubiquinol 3-hydroxylase from Cupriavidus pinatubonensis (strain JMP 134 / LMG 1197) (Cupriavidus necator (strain JMP 134)).